Here is a 71-residue protein sequence, read N- to C-terminus: ATP synthase subunit c (71 aa).

The next 2 helical transmembrane spans lie at 5–25 (GAAI…AIIV) and 47–67 (FIGV…GFLI).

It belongs to the ATPase C chain family. In terms of assembly, F-type ATPases have 2 components, F(1) - the catalytic core - and F(0) - the membrane proton channel. F(1) has five subunits: alpha(3), beta(3), gamma(1), delta(1), epsilon(1). F(0) has three main subunits: a(1), b(2) and c(10-14). The alpha and beta chains form an alternating ring which encloses part of the gamma chain. F(1) is attached to F(0) by a central stalk formed by the gamma and epsilon chains, while a peripheral stalk is formed by the delta and b chains.

It is found in the cell membrane. In terms of biological role, f(1)F(0) ATP synthase produces ATP from ADP in the presence of a proton or sodium gradient. F-type ATPases consist of two structural domains, F(1) containing the extramembraneous catalytic core and F(0) containing the membrane proton channel, linked together by a central stalk and a peripheral stalk. During catalysis, ATP synthesis in the catalytic domain of F(1) is coupled via a rotary mechanism of the central stalk subunits to proton translocation. Key component of the F(0) channel; it plays a direct role in translocation across the membrane. A homomeric c-ring of between 10-14 subunits forms the central stalk rotor element with the F(1) delta and epsilon subunits. This chain is ATP synthase subunit c, found in Alkalihalobacillus alcalophilus (Bacillus alcalophilus).